The chain runs to 179 residues: Cytochrome b6-f complex iron-sulfur subunit (179 aa).

The chain crosses the membrane as a helical span at residues 20–42; it reads LLTFGTITGVAAGALYPIVKYFI. The Rieske domain occupies 60–161; sequence GNDVIVSQFL…ANVTDNDKVV (102 aa). Residues Cys-107, His-109, Cys-125, and His-128 each contribute to the [2Fe-2S] cluster site. Cysteines 112 and 127 form a disulfide.

Belongs to the Rieske iron-sulfur protein family. The 4 large subunits of the cytochrome b6-f complex are cytochrome b6, subunit IV (17 kDa polypeptide, PetD), cytochrome f and the Rieske protein, while the 4 small subunits are PetG, PetL, PetM and PetN. The complex functions as a dimer. It depends on [2Fe-2S] cluster as a cofactor.

The protein resides in the cellular thylakoid membrane. The enzyme catalyses 2 oxidized [plastocyanin] + a plastoquinol + 2 H(+)(in) = 2 reduced [plastocyanin] + a plastoquinone + 4 H(+)(out). In terms of biological role, component of the cytochrome b6-f complex, which mediates electron transfer between photosystem II (PSII) and photosystem I (PSI), cyclic electron flow around PSI, and state transitions. In Microcystis aeruginosa (strain NIES-843 / IAM M-2473), this protein is Cytochrome b6-f complex iron-sulfur subunit.